Consider the following 191-residue polypeptide: Ribosomal RNA small subunit methyltransferase G (191 aa).

Residues G62, F67, 111–112 (IE), and R124 each bind S-adenosyl-L-methionine.

The protein belongs to the methyltransferase superfamily. RNA methyltransferase RsmG family.

The protein localises to the cytoplasm. The enzyme catalyses guanosine(527) in 16S rRNA + S-adenosyl-L-methionine = N(7)-methylguanosine(527) in 16S rRNA + S-adenosyl-L-homocysteine. Specifically methylates the N7 position of guanine in position 527 of 16S rRNA. This Rickettsia typhi (strain ATCC VR-144 / Wilmington) protein is Ribosomal RNA small subunit methyltransferase G.